The chain runs to 391 residues: Recombination and repair protein (391 aa).

60 to 67 provides a ligand contact to ATP; that stretch reads GPSKSFKS. Residues 364 to 374 are compositionally biased toward basic and acidic residues; that stretch reads KSPESKSKSAA. Positions 364–391 are disordered; that stretch reads KSPESKSKSAADLETDLEQLSDMEEFNE. Positions 376-391 are enriched in acidic residues; it reads LETDLEQLSDMEEFNE.

This sequence belongs to the RecA family.

Its function is as follows. Important in genetic recombination, DNA repair, and replication. Possesses pairing and strand-transfer activity. Interacts with dda and gene 32 proteins. The polypeptide is Recombination and repair protein (UVSX) (Enterobacteria phage T4 (Bacteriophage T4)).